The sequence spans 419 residues: NFATC2-interacting protein (419 aa).

Disordered stretches follow at residues 1–131 and 151–215; these read MAEP…GKVK and DEEE…HTRA. Residues 11-27 are compositionally biased toward gly residues; sequence WSGGSGAGRGGRGGWGG. Residues 35-51 are compositionally biased toward low complexity; it reads QRSPSRGTLDVVSVDLV. Residues S54, S84, S88, S90, S92, and S127 each carry the phosphoserine modification. Residues K129 and K131 each participate in a glycyl lysine isopeptide (Lys-Gly) (interchain with G-Cter in SUMO2) cross-link. A compositionally biased stretch (basic and acidic residues) spans 180-192; it reads RTKDKEEKKKTEF. Residues S198, S201, S204, S220, and S314 each carry the phosphoserine modification. Positions 209–231 form a coiled coil; sequence SRTHTRALKKLSEVNKRLQDLRS. Phosphothreonine occurs at positions 316 and 318. In terms of domain architecture, Ubiquitin-like spans 348-419; the sequence is LQLRVQGKEK…ESGDLIEVWG (72 aa). S369 and S390 each carry phosphoserine.

In terms of assembly, interacts with NFATC2, TRAF1, TRAF2 and PRMT1. Interacts with UBE2I/UBC9. Methylation at the N-terminus by PRMT1 modulates interaction with the NFAT complex and results in augmented cytokine production.

The protein resides in the nucleus. It is found in the cytoplasm. Functionally, in T-helper 2 (Th2) cells, regulates the magnitude of NFAT-driven transcription of a specific subset of cytokine genes, including IL3, IL4, IL5 and IL13, but not IL2. Recruits PRMT1 to the IL4 promoter; this leads to enhancement of histone H4 'Arg-3'-methylation and facilitates subsequent histone acetylation at the IL4 locus, thus promotes robust cytokine expression. Down-regulates formation of poly-SUMO chains by UBE2I/UBC9. The sequence is that of NFATC2-interacting protein (NFATC2IP) from Homo sapiens (Human).